The primary structure comprises 551 residues: HTH-type transcriptional regulator SgrR (551 aa).

The region spanning 1–116 (MPSARLQQQF…LVSHLGRSFR (116 aa)) is the HTH marR-type domain. The H-T-H motif DNA-binding region spans 26-49 (LNELAALLSCSRRHMRTLLNTMQD). Positions 163 to 492 (ELEADIAHHW…IDWQADAARW (330 aa)) are solute-binding.

Functionally, activates the small RNA gene sgrS under glucose-phosphate stress conditions as well as yfdZ. Represses its own transcription under both stress and non-stress conditions. Might act as a sensor of the intracellular accumulation of phosphoglucose by binding these molecules in its C-terminal solute-binding domain. The protein is HTH-type transcriptional regulator SgrR of Escherichia coli O1:K1 / APEC.